A 335-amino-acid polypeptide reads, in one-letter code: Methionine import ATP-binding protein MetN (335 aa).

Residues 2–241 (IEFQRLHKSY…PKHVTTRRFV (240 aa)) enclose the ABC transporter domain. Residue 38 to 45 (GHSGAGKS) coordinates ATP.

Belongs to the ABC transporter superfamily. Methionine importer (TC 3.A.1.24) family. The complex is composed of two ATP-binding proteins (MetN), two transmembrane proteins (MetI) and a solute-binding protein (MetQ).

It is found in the cell inner membrane. The catalysed reaction is L-methionine(out) + ATP + H2O = L-methionine(in) + ADP + phosphate + H(+). The enzyme catalyses D-methionine(out) + ATP + H2O = D-methionine(in) + ADP + phosphate + H(+). Part of the ABC transporter complex MetNIQ involved in methionine import. Responsible for energy coupling to the transport system. The chain is Methionine import ATP-binding protein MetN from Xanthomonas oryzae pv. oryzae (strain MAFF 311018).